We begin with the raw amino-acid sequence, 265 residues long: Mlc titration factor A (265 aa).

Residues His111, His148, His152, and Glu211 each coordinate Zn(2+).

The protein belongs to the MtfA family. As to quaternary structure, interacts with Mlc. Zn(2+) serves as cofactor.

Its subcellular location is the cytoplasm. In terms of biological role, involved in the modulation of the activity of the glucose-phosphotransferase system (glucose-PTS). Interacts with the transcriptional repressor Mlc, preventing its interaction with DNA and leading to the modulation of expression of genes regulated by Mlc, including ptsG, which encodes the PTS system glucose-specific EIICB component. Its function is as follows. Shows zinc-dependent metallopeptidase activity. The polypeptide is Mlc titration factor A (Escherichia coli O6:K15:H31 (strain 536 / UPEC)).